Consider the following 179-residue polypeptide: Large ribosomal subunit protein bL27c (179 aa).

Residues 1–51 (MAVSFSLVGAFKGLSLASSSSFLKGDFGAAFPVAPKFSVSFPLKSPLTIES) constitute a chloroplast transit peptide.

This sequence belongs to the bacterial ribosomal protein bL27 family. In terms of assembly, part of the 50S ribosomal subunit.

The protein localises to the plastid. Its subcellular location is the chloroplast. The sequence is that of Large ribosomal subunit protein bL27c (RPL27) from Nicotiana tabacum (Common tobacco).